Reading from the N-terminus, the 245-residue chain is Membrane-spanning 4-domains subfamily A member 15 (245 aa).

The tract at residues 1–30 (MWERRGRGESAAGTAAVASRNASGLRPPPA) is disordered. 4 consecutive transmembrane segments (helical) span residues 78-98 (GTVQILIGLIHLGFGSVLLMV), 103-123 (LGMLFIEGGVPFWGGACFIIS), 147-167 (ILSAMAAFAGTAILLMDFGVT), and 176-196 (LAVLTIFTILEFFIAVIATHF).

The protein belongs to the MS4A family.

The protein resides in the membrane. In terms of biological role, may be involved in signal transduction as a component of a multimeric receptor complex. The protein is Membrane-spanning 4-domains subfamily A member 15 (Ms4a15) of Mus musculus (Mouse).